The chain runs to 440 residues: D-serine dehydratase (440 aa).

At K116 the chain carries N6-(pyridoxal phosphate)lysine.

The protein belongs to the serine/threonine dehydratase family. DsdA subfamily. Monomer. Requires pyridoxal 5'-phosphate as cofactor.

The catalysed reaction is D-serine = pyruvate + NH4(+). This Salmonella schwarzengrund (strain CVM19633) protein is D-serine dehydratase.